We begin with the raw amino-acid sequence, 161 residues long: 3-isopropylmalate dehydratase small subunit (161 aa).

This sequence belongs to the LeuD family. LeuD type 2 subfamily. In terms of assembly, heterodimer of LeuC and LeuD.

It catalyses the reaction (2R,3S)-3-isopropylmalate = (2S)-2-isopropylmalate. The protein operates within amino-acid biosynthesis; L-leucine biosynthesis; L-leucine from 3-methyl-2-oxobutanoate: step 2/4. Catalyzes the isomerization between 2-isopropylmalate and 3-isopropylmalate, via the formation of 2-isopropylmaleate. This Pyrobaculum islandicum (strain DSM 4184 / JCM 9189 / GEO3) protein is 3-isopropylmalate dehydratase small subunit.